Consider the following 260-residue polypeptide: Imidazole glycerol phosphate synthase subunit HisF (260 aa).

Residues Asp-11 and Asp-130 contribute to the active site.

This sequence belongs to the HisA/HisF family. As to quaternary structure, heterodimer of HisH and HisF.

It is found in the cytoplasm. The catalysed reaction is 5-[(5-phospho-1-deoxy-D-ribulos-1-ylimino)methylamino]-1-(5-phospho-beta-D-ribosyl)imidazole-4-carboxamide + L-glutamine = D-erythro-1-(imidazol-4-yl)glycerol 3-phosphate + 5-amino-1-(5-phospho-beta-D-ribosyl)imidazole-4-carboxamide + L-glutamate + H(+). Its pathway is amino-acid biosynthesis; L-histidine biosynthesis; L-histidine from 5-phospho-alpha-D-ribose 1-diphosphate: step 5/9. Functionally, IGPS catalyzes the conversion of PRFAR and glutamine to IGP, AICAR and glutamate. The HisF subunit catalyzes the cyclization activity that produces IGP and AICAR from PRFAR using the ammonia provided by the HisH subunit. In Desulfatibacillum aliphaticivorans, this protein is Imidazole glycerol phosphate synthase subunit HisF.